Reading from the N-terminus, the 396-residue chain is L-lactate dehydrogenase (396 aa).

In terms of domain architecture, FMN hydroxy acid dehydrogenase spans 1-380 (MIISAASDYR…TQDSLVQVLG (380 aa)). Tyr-24 contributes to the substrate binding site. FMN is bound by residues Ser-106 and Gln-127. Tyr-129 serves as a coordination point for substrate. Thr-155 contributes to the FMN binding site. Arg-164 contributes to the substrate binding site. Residue Lys-251 participates in FMN binding. Residue His-275 is the Proton acceptor of the active site. Residue Arg-278 participates in substrate binding. Residue 306–330 (DSGIRNGLDVVRMIALGADTVLLGR) coordinates FMN.

Belongs to the FMN-dependent alpha-hydroxy acid dehydrogenase family. Requires FMN as cofactor.

It localises to the cell inner membrane. It carries out the reaction (S)-lactate + A = pyruvate + AH2. Catalyzes the conversion of L-lactate to pyruvate. Is coupled to the respiratory chain. This is L-lactate dehydrogenase from Escherichia coli O1:K1 / APEC.